The sequence spans 648 residues: Bifunctional protein TilS/HprT (648 aa).

29–34 (SGGPDS) contributes to the ATP binding site. Asp627 is a binding site for Mg(2+).

The protein in the N-terminal section; belongs to the tRNA(Ile)-lysidine synthase family. In the C-terminal section; belongs to the purine/pyrimidine phosphoribosyltransferase family. Mg(2+) is required as a cofactor.

The protein localises to the cytoplasm. It catalyses the reaction IMP + diphosphate = hypoxanthine + 5-phospho-alpha-D-ribose 1-diphosphate. The enzyme catalyses GMP + diphosphate = guanine + 5-phospho-alpha-D-ribose 1-diphosphate. The catalysed reaction is cytidine(34) in tRNA(Ile2) + L-lysine + ATP = lysidine(34) in tRNA(Ile2) + AMP + diphosphate + H(+). Functionally, ligates lysine onto the cytidine present at position 34 of the AUA codon-specific tRNA(Ile) that contains the anticodon CAU, in an ATP-dependent manner. Cytidine is converted to lysidine, thus changing the amino acid specificity of the tRNA from methionine to isoleucine. The polypeptide is Bifunctional protein TilS/HprT (tilS/hprT) (Listeria innocua serovar 6a (strain ATCC BAA-680 / CLIP 11262)).